We begin with the raw amino-acid sequence, 249 residues long: Undecaprenyl-diphosphatase (249 aa).

Transmembrane regions (helical) follow at residues 11-31, 35-55, 80-100, 101-121, 135-155, 180-200, 202-222, and 226-246; these read GLTE…TAIF, PDVG…LIFV, LVLS…FIES, VFSS…LMLL, IPYL…LPGI, FLMS…KVAF, TEQI…LYLV, and VIGG…FFVL.

Belongs to the UppP family.

The protein localises to the cell membrane. The catalysed reaction is di-trans,octa-cis-undecaprenyl diphosphate + H2O = di-trans,octa-cis-undecaprenyl phosphate + phosphate + H(+). In terms of biological role, catalyzes the dephosphorylation of undecaprenyl diphosphate (UPP). The polypeptide is Undecaprenyl-diphosphatase (Methanococcus maripaludis (strain C6 / ATCC BAA-1332)).